The chain runs to 696 residues: Glycine--tRNA ligase beta subunit (696 aa).

It belongs to the class-II aminoacyl-tRNA synthetase family. Tetramer of two alpha and two beta subunits.

The protein resides in the cytoplasm. The enzyme catalyses tRNA(Gly) + glycine + ATP = glycyl-tRNA(Gly) + AMP + diphosphate. The polypeptide is Glycine--tRNA ligase beta subunit (Aromatoleum aromaticum (strain DSM 19018 / LMG 30748 / EbN1) (Azoarcus sp. (strain EbN1))).